Reading from the N-terminus, the 263-residue chain is Methylesterase 2 (263 aa).

Ser-85 (acyl-ester intermediate) is an active-site residue. Catalysis depends on charge relay system residues Asp-213 and His-241.

The protein belongs to the AB hydrolase superfamily. Methylesterase family.

The enzyme catalyses methyl (indol-3-yl)acetate + H2O = (indol-3-yl)acetate + methanol + H(+). The catalysed reaction is methyl (-)-jasmonate + H2O = jasmonate + methanol + H(+). It catalyses the reaction methyl salicylate + H2O = salicylate + methanol + H(+). It functions in the pathway plant hormone biosynthesis. It participates in lipid metabolism; oxylipin biosynthesis. Esterase activity is down-regulated by salicylic acid (SA). Down-regulated by agrochemicals Paraoxon, 3,4-DCl and Profenofos. In terms of biological role, methylesterase shown to have carboxylesterase activity, methyl indole-3-acetic acid (MeIAA) esterase activity, methyl salicylate (MeSA) esterase activity and methyl jasmonate (MeJA) esterase activity in vitro. This chain is Methylesterase 2, found in Arabidopsis thaliana (Mouse-ear cress).